Reading from the N-terminus, the 143-residue chain is uncharacterized protein (143 aa).

One can recognise an HTH marR-type domain in the interval 11–139 (EYELTTFIRR…FGELLQRMNK (129 aa)). A DNA-binding region (H-T-H motif) is located at residues 53 to 76 (VKELAESFKLDISTLSRQAAALEA).

This is an uncharacterized protein from Bacillus subtilis (strain 168).